The sequence spans 155 residues: Protein-export protein SecB (155 aa).

Belongs to the SecB family. Homotetramer, a dimer of dimers. One homotetramer interacts with 1 SecA dimer.

Its subcellular location is the cytoplasm. Functionally, one of the proteins required for the normal export of preproteins out of the cell cytoplasm. It is a molecular chaperone that binds to a subset of precursor proteins, maintaining them in a translocation-competent state. It also specifically binds to its receptor SecA. In Shigella sonnei (strain Ss046), this protein is Protein-export protein SecB.